We begin with the raw amino-acid sequence, 748 residues long: MSQWNQVQQLEIKFLEQVDQFYDDNFPMEIRHLLAQWIENQDWEAASNNETMATILLQNLLIQLDEQLGRVSKEKNLLLIHNLKRIRKVLQGKFHGNPMHVAVVISNCLREERRILAAANMPVQGPLEKSLQSSSVSERQRNVEHKVAAIKNSVQMTEQDTKYLEDLQDEFDYRYKTIQTMDQSDKNSAMVNQEVLTLQEMLNSLDFKRKEALSKMTQIIHETDLLMNTMLIEELQDWKRRQQIACIGGPLHNGLDQLQNCFTLLAESLFQLRRQLEKLEEQSTKMTYEGDPIPMQRTHMLERVTFLIYNLFKNSFVVERQPCMPTHPQRPLVLKTLIQFTVKLRLLIKLPELNYQVKVKASIDKNVSTLSNRRFVLCGTNVKAMSIEESSNGSLSVEFRHLQPKEMKSSAGGKGNEGCHMVTEELHSITFETQICLYGLTIDLETSSLPVVMISNVSQLPNAWASIIWYNVSTNDSQNLVFFNNPPPATLSQLLEVMSWQFSSYVGRGLNSDQLHMLAEKLTVQSSYSDGHLTWAKFCKEHLPGKSFTFWTWLEAILDLIKKHILPLWIDGYVMGFVSKEKERLLLKDKMPGTFLLRFSESHLGGITFTWVDHSESGEVRFHSVEPYNKGRLSALPFADILRDYKVIMAENIPENPLKYLYPDIPKDKAFGKHYSSQPCEVSRPTERGDKGYVPSVFIPISTIRSDSTEPHSPSDLLPMSPSVYAVLRENLSPTTIETAMKSPYSAE.

Residues 569–664 (WIDGYVMGFV…ENPLKYLYPD (96 aa)) enclose the SH2 domain. Position 667 is an N6-acetyllysine (lysine 667). Residue tyrosine 693 is modified to Phosphotyrosine; by JAK. Serine 721 is subject to Phosphoserine; by MAP2K6.

It belongs to the transcription factor STAT family. In terms of assembly, forms a homodimer or a heterodimer with a related family member. Interacts with ARL2BP. The SH2 domain interacts, in vitro, with IL12RB2 via a short cytoplasmic domain. Interacts with STAT1. Interacts with JUN; this complex efficiently interacts with the AP-1-related sequence of the IFN-gamma. In terms of processing, acetylation at Lys-667 is required for JAK2-mediated phosphorylation and activation of STAT4. Post-translationally, tyrosine phosphorylated upon IL12 and IFN-alpha activation, but not by IFN-gamma in T-lymphocytes and NK cells. Serine phosphorylation is required for maximal transcriptional activity but not for DNA binding. Phosphorylation by MAP2K6 at Ser-721 is required for full transcriptional activity induced by IL12. However this serine phosphorylation is not required for cell proliferation although critical for IFN-gamma production.

It localises to the cytoplasm. The protein resides in the nucleus. Transcriptional regulator mainly expressed in hematopoietic cells that plays a critical role in cellular growth, differentiation and immune response. Plays a key role in the differentiation of T-helper 1 cells and the production of interferon-gamma. Also participates in multiple neutrophil functions including chemotaxis and production of the neutrophil extracellular traps. After IL12 binding to its receptor IL12RB2, STAT4 interacts with the intracellular domain of IL12RB2 and becomes tyrosine phosphorylated. Phosphorylated STAT4 then homodimerizes and migrates to the nucleus where it can recognize STAT target sequences present in IL12 responsive genes. Although IL12 appears to be the predominant activating signal, STAT4 can also be phosphorylated and activated in response to IFN-gamma stimulation via JAK1 and TYK2 and in response to different interleukins including IL23, IL2 and IL35. Transcription activation of IFN-gamma gene is mediated by interaction with JUN that forms a complex that efficiently interacts with the AP-1-related sequence of the IFN-gamma promoter. In response to IFN-alpha/beta signaling, acts as a transcriptional repressor and suppresses IL5 and IL13 mRNA expression during response to T-cell receptor (TCR) activation. The protein is Signal transducer and activator of transcription 4 (STAT4) of Homo sapiens (Human).